The sequence spans 534 residues: Glucans biosynthesis protein D (534 aa).

The segment at residues 1–30 (MRMQRRHLLKNAAAALAALGLPALPQWALA) is a signal peptide (tat-type signal).

It belongs to the OpgD/OpgG family. Predicted to be exported by the Tat system. The position of the signal peptide cleavage has not been experimentally proven.

Its subcellular location is the periplasm. It functions in the pathway glycan metabolism; osmoregulated periplasmic glucan (OPG) biosynthesis. In terms of biological role, probably involved in the control of the structural glucose backbone of osmoregulated periplasmic glucans (OPGs). The polypeptide is Glucans biosynthesis protein D (Xanthomonas oryzae pv. oryzae (strain PXO99A)).